We begin with the raw amino-acid sequence, 128 residues long: Small ribosomal subunit protein uS12 (128 aa).

The interval 1–30 (MPTINQLIRKGREPKERKSKSPALMGNPQK) is disordered. Position 89 is a 3-methylthioaspartic acid (Asp-89). The disordered stretch occupies residues 106-128 (GVEGRKQGRSKYGTKRPKEGGKK).

This sequence belongs to the universal ribosomal protein uS12 family. In terms of assembly, part of the 30S ribosomal subunit. Contacts proteins S8 and S17. May interact with IF1 in the 30S initiation complex.

Functionally, with S4 and S5 plays an important role in translational accuracy. In terms of biological role, interacts with and stabilizes bases of the 16S rRNA that are involved in tRNA selection in the A site and with the mRNA backbone. Located at the interface of the 30S and 50S subunits, it traverses the body of the 30S subunit contacting proteins on the other side and probably holding the rRNA structure together. The combined cluster of proteins S8, S12 and S17 appears to hold together the shoulder and platform of the 30S subunit. The chain is Small ribosomal subunit protein uS12 from Dictyoglomus thermophilum (strain ATCC 35947 / DSM 3960 / H-6-12).